Reading from the N-terminus, the 159-residue chain is Probable inactive acireductone dioxygenase 2 (159 aa).

This sequence belongs to the acireductone dioxygenase (ARD) family.

The protein localises to the cytoplasm. It is found in the nucleus. Functionally, probable inactive acireductone dioxygenase. In Caenorhabditis briggsae, this protein is Probable inactive acireductone dioxygenase 2.